We begin with the raw amino-acid sequence, 349 residues long: S-adenosylmethionine:tRNA ribosyltransferase-isomerase (349 aa).

The protein belongs to the QueA family. As to quaternary structure, monomer.

Its subcellular location is the cytoplasm. The enzyme catalyses 7-aminomethyl-7-carbaguanosine(34) in tRNA + S-adenosyl-L-methionine = epoxyqueuosine(34) in tRNA + adenine + L-methionine + 2 H(+). The protein operates within tRNA modification; tRNA-queuosine biosynthesis. Transfers and isomerizes the ribose moiety from AdoMet to the 7-aminomethyl group of 7-deazaguanine (preQ1-tRNA) to give epoxyqueuosine (oQ-tRNA). The protein is S-adenosylmethionine:tRNA ribosyltransferase-isomerase of Pseudomonas putida (strain ATCC 700007 / DSM 6899 / JCM 31910 / BCRC 17059 / LMG 24140 / F1).